The following is a 668-amino-acid chain: DNA mismatch repair protein MutL (668 aa).

Belongs to the DNA mismatch repair MutL/HexB family.

In terms of biological role, this protein is involved in the repair of mismatches in DNA. It is required for dam-dependent methyl-directed DNA mismatch repair. May act as a 'molecular matchmaker', a protein that promotes the formation of a stable complex between two or more DNA-binding proteins in an ATP-dependent manner without itself being part of a final effector complex. This is DNA mismatch repair protein MutL from Limosilactobacillus reuteri (strain DSM 20016) (Lactobacillus reuteri).